Consider the following 431-residue polypeptide: MSKILIRAMVLPMTGPEDFYPEGEIGIENDRILFVGEKGSAPDSFIPDQIIDLPEDVVMPGLINTHTHAAMTMLRSYADDLPLMPWLQTKIWPFEDKMSDEDIYWGTLLALGEMIQSGTTTMLDMYASMDQVAKAVLEAGTRGVLSRGLIGNAPNGERAFAENIDLVKNYHGAGQGRIQVMFGPHAPYTCSGEFLQRVKQEADRLGVGIHIHVAETEDEIKTIKEQYGKTPVQWLEELGLFGGHVVAAHCVHLTEEDQEIMAQNKVFIAHNPESNMKLNSGTAPIPELRSRGVVVGLGTDGTSSNNNLDMFGEMRSAAFQQKLVKGATALPAYEVLQMATVDGARTLGLHDVGVLAPGYKADLISINFDQPHFYPRFSIPAHLVYVAHAGDVRTVMVDGKILMQERQLMTIDIKRVCREVEKRAKGIAQGL.

The Zn(2+) site is built by His66 and His68. Glu95, Arg147, and His185 together coordinate substrate. Residue His212 participates in Zn(2+) binding. Glu215 and Asp300 together coordinate substrate. Asp300 provides a ligand contact to Zn(2+).

Belongs to the metallo-dependent hydrolases superfamily. MTA/SAH deaminase family. Zn(2+) serves as cofactor.

It carries out the reaction S-adenosyl-L-homocysteine + H2O + H(+) = S-inosyl-L-homocysteine + NH4(+). The catalysed reaction is S-methyl-5'-thioadenosine + H2O + H(+) = S-methyl-5'-thioinosine + NH4(+). Catalyzes the deamination of 5-methylthioadenosine and S-adenosyl-L-homocysteine into 5-methylthioinosine and S-inosyl-L-homocysteine, respectively. Is also able to deaminate adenosine. This is 5-methylthioadenosine/S-adenosylhomocysteine deaminase from Desulfitobacterium hafniense (strain Y51).